The sequence spans 143 residues: Transcriptional regulator MraZ (143 aa).

SpoVT-AbrB domains follow at residues 5 to 47 (TYEP…SAEE) and 76 to 119 (ASDE…DAAA).

This sequence belongs to the MraZ family. In terms of assembly, forms oligomers.

The protein localises to the cytoplasm. The protein resides in the nucleoid. The chain is Transcriptional regulator MraZ from Kocuria rhizophila (strain ATCC 9341 / DSM 348 / NBRC 103217 / DC2201).